A 209-amino-acid polypeptide reads, in one-letter code: Ribosomal RNA large subunit methyltransferase E (209 aa).

Positions 63, 65, 83, 99, and 124 each coordinate S-adenosyl-L-methionine. Lys-164 acts as the Proton acceptor in catalysis.

Belongs to the class I-like SAM-binding methyltransferase superfamily. RNA methyltransferase RlmE family.

Its subcellular location is the cytoplasm. It catalyses the reaction uridine(2552) in 23S rRNA + S-adenosyl-L-methionine = 2'-O-methyluridine(2552) in 23S rRNA + S-adenosyl-L-homocysteine + H(+). Functionally, specifically methylates the uridine in position 2552 of 23S rRNA at the 2'-O position of the ribose in the fully assembled 50S ribosomal subunit. In Proteus mirabilis (strain HI4320), this protein is Ribosomal RNA large subunit methyltransferase E.